Consider the following 70-residue polypeptide: Large ribosomal subunit protein eL38 (70 aa).

The protein belongs to the eukaryotic ribosomal protein eL38 family.

The polypeptide is Large ribosomal subunit protein eL38 (RpL38) (Bombyx mori (Silk moth)).